The sequence spans 487 residues: Serine/threonine-protein kinase BSK7 (487 aa).

Residue Gly-2 is the site of N-myristoyl glycine attachment. Residues 59-325 enclose the Protein kinase domain; sequence ENIVSEHGEK…DLETPSHQLM (267 aa). ATP contacts are provided by residues 65–73 and Lys-87; that span reads HGEKAPNVV. Catalysis depends on Asp-181, which acts as the Proton acceptor.

This sequence belongs to the protein kinase superfamily. Ser/Thr protein kinase family.

It is found in the cell membrane. The catalysed reaction is L-seryl-[protein] + ATP = O-phospho-L-seryl-[protein] + ADP + H(+). The enzyme catalyses L-threonyl-[protein] + ATP = O-phospho-L-threonyl-[protein] + ADP + H(+). Probable serine/threonine kinase that acts as a positive regulator of brassinosteroid (BR) signaling downstream of the receptor kinase BRI1. Functions redundantly with BSK3, BSK5, BSK6 and BSK8. The polypeptide is Serine/threonine-protein kinase BSK7 (Arabidopsis thaliana (Mouse-ear cress)).